A 435-amino-acid polypeptide reads, in one-letter code: Cell adhesion molecule 2 (435 aa).

An N-terminal signal peptide occupies residues 1–24; that stretch reads MIWKRSAVLRFYSVCGLLLQGSQG. At 25–367 the chain is on the extracellular side; that stretch reads QFPLTQNVTV…ALAGQNGPDH (343 aa). Positions 27 to 119 constitute an Ig-like V-type domain; it reads PLTQNVTVVE…PVKTSKAYLT (93 aa). N-linked (GlcNAc...) asparagine glycans are attached at residues Asn31 and Asn51. Intrachain disulfides connect Cys44–Cys104, Cys146–Cys203, and Cys248–Cys296. Ig-like C2-type domains are found at residues 127–219 and 227–312; these read PQIS…VAMQ and PSVK…YVLI. The N-linked (GlcNAc...) asparagine glycan is linked to Asn291. Residues 368–388 traverse the membrane as a helical segment; that stretch reads ALIGGIVAVVVFVTLCSIFLL. The Cytoplasmic portion of the chain corresponds to 389 to 435; the sequence is GRYLARHKGTYLTNEAKGAEDAPDADTAIINAEGSQVNAEEKKEYFI. Ser423 carries the post-translational modification Phosphoserine.

This sequence belongs to the nectin family.

It localises to the cell membrane. The protein resides in the synapse. Its subcellular location is the cell projection. The protein localises to the axon. Adhesion molecule that engages in homo- and heterophilic interactions with the other nectin-like family members, leading to cell aggregation. Important for synapse organization, providing regulated trans-synaptic adhesion. Preferentially binds to oligodendrocytes. Functionally, (Microbial infection) Induces cell fusion in neuron infected by a neuropathogenic strain of measles. Interacts with measles hemagglutinin to trigger hyperfusogenic F-mediated membrane fusion and presumably transsynaptic cell-to-cell transmission of the virus. The sequence is that of Cell adhesion molecule 2 (CADM2) from Homo sapiens (Human).